The chain runs to 651 residues: Mitogen-activated protein kinase kinase kinase 2 (651 aa).

The Protein kinase domain maps to 68 to 330 (WRKGQLIGRG…ASELLKHPFV (263 aa)). Residues 74-82 (IGRGAFGTV) and Lys-97 contribute to the ATP site. Residues 105–130 (CASKEKTQAHIQELEEEVKLLKNLSH) adopt a coiled-coil conformation. Residues Lys-108 and Lys-110 each participate in a glycyl lysine isopeptide (Lys-Gly) (interchain with G-Cter in ubiquitin) cross-link. Residue Asp-196 is the Proton acceptor of the active site. Disordered regions lie at residues 460-483 (GNGETETKVSMEVDHPSYSEDENE), 537-601 (RGFL…VALS), and 618-651 (KRREITRQAGMGSSPRDRSLSRHREKSRFASPGK). The span at 464–477 (TETKVSMEVDHPSY) shows a compositional bias: basic and acidic residues. Polar residues predominate over residues 570-599 (SPESGNSSGAPKNSNASAGAEQESNSQSVA). Residues 605-628 (RKWKEELDQELERKRREITRQAGM) adopt a coiled-coil conformation.

Belongs to the protein kinase superfamily. STE Ser/Thr protein kinase family. MAP kinase kinase kinase subfamily. In terms of tissue distribution, expressed in roots and flowers.

The protein resides in the cytoplasm. It localises to the cytoskeleton. It catalyses the reaction L-seryl-[protein] + ATP = O-phospho-L-seryl-[protein] + ADP + H(+). The catalysed reaction is L-threonyl-[protein] + ATP = O-phospho-L-threonyl-[protein] + ADP + H(+). Functionally, involved in cortical microtubules organization and stabilization by regulating the phosphorylation state of microtubule-associated proteins such as MAP65-1. The chain is Mitogen-activated protein kinase kinase kinase 2 (ANP2) from Arabidopsis thaliana (Mouse-ear cress).